A 357-amino-acid polypeptide reads, in one-letter code: Red-sensitive opsin (357 aa).

Over 1 to 49 the chain is Extracellular; it reads MAEQWGKQVFAARRQNEDTTRGSAFTYTNSNHTRDPFEGPNYHIAPRWV. N-linked (GlcNAc...) asparagine glycosylation occurs at Asn-31. A helical transmembrane segment spans residues 50–74; the sequence is YNLATLWMFFVVVLSVFTNGLVLVA. Over 75–86 the chain is Cytoplasmic; sequence TAKFKKLRHPLN. Residues 87-112 form a helical membrane-spanning segment; sequence WILSNLAIADLGETVFASTISVCNQF. Residues 113 to 126 lie on the Extracellular side of the membrane; it reads FGYFILGHPMCVFE. The cysteines at positions 123 and 200 are disulfide-linked. The chain crosses the membrane as a helical span at residues 127–146; it reads GYVVSTCGIAALWSLTIISW. Topologically, residues 147 to 165 are cytoplasmic; sequence ERWVVVCKPFGNVKFDAKW. The chain crosses the membrane as a helical span at residues 166–189; the sequence is AIGGIVFSWVWSAVWCAPPVFGWS. The Extracellular portion of the chain corresponds to 190–215; that stretch reads RYWPHGLKTSCGPDVFSGSDDPGVQS. The chain crosses the membrane as a helical span at residues 216-243; the sequence is YMIVLMITCCIIPLAIIILCYLAVWLAI. Residues 244–265 are Cytoplasmic-facing; the sequence is RAVAMQQKESESTQKAEREVSR. The helical transmembrane segment at 266–289 threads the bilayer; it reads MVVVMIVAYCVCWGPYTFFACFAA. Over 290–297 the chain is Extracellular; sequence ANPGYAFH. A helical transmembrane segment spans residues 298–322; that stretch reads PLAAAMPAYFAKSATIYNPVIYVFM. Lys-309 carries the post-translational modification N6-(retinylidene)lysine. Topologically, residues 323 to 357 are cytoplasmic; that stretch reads NRQFRTCIMQLFGKQVDDGSEVSTSKTEVSSVAPA.

This sequence belongs to the G-protein coupled receptor 1 family. Opsin subfamily. Phosphorylated on some or all of the serine and threonine residues present in the C-terminal region. In terms of tissue distribution, the color pigments are found in the cone photoreceptor cells.

Its subcellular location is the membrane. Its function is as follows. Visual pigments are the light-absorbing molecules that mediate vision. They consist of an apoprotein, opsin, covalently linked to cis-retinal. The chain is Red-sensitive opsin from Oryzias latipes (Japanese rice fish).